The chain runs to 100 residues: MSKKSLIARQRKRIILVLIHSHNRYVYRTNGKDEKSFEKKLRIYSFLQKLPRNSLRCRLRNRCYVTGRSRGYFRTFGLSRHILRDMAHYGLLPGVTKASW.

The protein belongs to the universal ribosomal protein uS14 family. As to quaternary structure, part of the 30S ribosomal subunit.

The protein resides in the plastid. It is found in the chloroplast. Functionally, binds 16S rRNA, required for the assembly of 30S particles. The protein is Small ribosomal subunit protein uS14c of Euglena gracilis.